We begin with the raw amino-acid sequence, 365 residues long: Eukaryotic translation initiation factor 3 subunit H (365 aa).

Residues 11–160 (VKVEALVVMK…LRAFRLSPKF (150 aa)) form the MPN domain.

Belongs to the eIF-3 subunit H family. Component of the eukaryotic translation initiation factor 3 (eIF-3) complex.

It localises to the cytoplasm. Its function is as follows. Component of the eukaryotic translation initiation factor 3 (eIF-3) complex, which is involved in protein synthesis of a specialized repertoire of mRNAs and, together with other initiation factors, stimulates binding of mRNA and methionyl-tRNAi to the 40S ribosome. The eIF-3 complex specifically targets and initiates translation of a subset of mRNAs involved in cell proliferation. This chain is Eukaryotic translation initiation factor 3 subunit H, found in Aspergillus fumigatus (strain CBS 144.89 / FGSC A1163 / CEA10) (Neosartorya fumigata).